We begin with the raw amino-acid sequence, 567 residues long: PEX5-related protein (567 aa).

A disordered region spans residues 56 to 105; that stretch reads SEPVSQPQTKAKKSEPSSKSSSLKKKADGSDLISADAEQRAQALRGPETS. Ser-146 bears the Phosphoserine mark. The tract at residues 150-169 is disordered; it reads LWSAEHRSQPELSTGKSALN. Residues Ser-194, Ser-198, and Ser-202 each carry the phosphoserine modification. 3 TPR repeats span residues 267-300, 301-334, and 336-368; these read WPGAFEEGLKRLKEGDLPVTILFMEAAILQDPGD, AEAWQFLGITQAENENEQAAIVALQRCLELQPNN, and KALMALAVSYTNTSHQQDACEALKNWIKQNPKY. 2 positions are modified to phosphoserine: Ser-386 and Ser-388. TPR repeat units lie at residues 415-448, 450-482, and 484-516; these read PDLQTGLGVLFHLSGEFNRAIDAFNAALTVRPED, SLWNRLGATLANGDRSEEAVEAYTRALEIQPGF, and RSRYNLGISCINLGAYREAVSNFLTALSLQRKS.

Belongs to the peroxisomal targeting signal receptor family. In terms of assembly, interacts with RAB8B. Forms an obligate 4:4 complex with HCN2. Interacts with HCN3. Interacts with HCN4 with a 4:4 HCN4:PEX5L stoichiometry; reduces the effects of cAMP on the voltage-dependence and rate of activation of HCN4.

The protein localises to the cytoplasm. Its subcellular location is the membrane. Accessory subunit of hyperpolarization-activated cyclic nucleotide-gated (HCN) channels, regulating their cell-surface expression and cyclic nucleotide dependence. This chain is PEX5-related protein (Pex5l), found in Mus musculus (Mouse).